We begin with the raw amino-acid sequence, 740 residues long: Eukaryotic translation initiation factor 3 subunit B (740 aa).

A compositionally biased stretch (polar residues) spans 1-10 (MAPSFDTLSE). The disordered stretch occupies residues 1 to 20 (MAPSFDTLSEQDLHEEEEEE). The 87-residue stretch at 40–126 (TFVVIDGLPV…HTLLVNKLMD (87 aa)) folds into the RRM domain. 6 WD repeats span residues 193-230 (AHWTQLFVQWSPKGTYLASVHPQGVQLWGGPAFSKQKQ), 232-289 (PHPF…RSFV), 302-343 (EPKK…LLGK), 455-496 (SLKD…SFFA), 513-556 (IEKK…EKPE), and 571-609 (TEHYGVTDIDWDPTGRYVVSSASVWTHQLENGWNLHTFA). Residues 696–721 (AYGLPEEADDPKLAKDAAATTQEQGE) are disordered.

The protein belongs to the eIF-3 subunit B family. As to quaternary structure, component of the eukaryotic translation initiation factor 3 (eIF-3) complex.

The protein resides in the cytoplasm. RNA-binding component of the eukaryotic translation initiation factor 3 (eIF-3) complex, which is involved in protein synthesis of a specialized repertoire of mRNAs and, together with other initiation factors, stimulates binding of mRNA and methionyl-tRNAi to the 40S ribosome. The eIF-3 complex specifically targets and initiates translation of a subset of mRNAs involved in cell proliferation. The polypeptide is Eukaryotic translation initiation factor 3 subunit B (prt1) (Aspergillus fumigatus (strain ATCC MYA-4609 / CBS 101355 / FGSC A1100 / Af293) (Neosartorya fumigata)).